The sequence spans 355 residues: UDP-3-O-acylglucosamine N-acyltransferase (355 aa).

H258 functions as the Proton acceptor in the catalytic mechanism.

Belongs to the transferase hexapeptide repeat family. LpxD subfamily. In terms of assembly, homotrimer.

It catalyses the reaction a UDP-3-O-[(3R)-3-hydroxyacyl]-alpha-D-glucosamine + a (3R)-hydroxyacyl-[ACP] = a UDP-2-N,3-O-bis[(3R)-3-hydroxyacyl]-alpha-D-glucosamine + holo-[ACP] + H(+). The protein operates within bacterial outer membrane biogenesis; LPS lipid A biosynthesis. Functionally, catalyzes the N-acylation of UDP-3-O-acylglucosamine using 3-hydroxyacyl-ACP as the acyl donor. Is involved in the biosynthesis of lipid A, a phosphorylated glycolipid that anchors the lipopolysaccharide to the outer membrane of the cell. The sequence is that of UDP-3-O-acylglucosamine N-acyltransferase from Rhizobium rhizogenes (strain K84 / ATCC BAA-868) (Agrobacterium radiobacter).